A 364-amino-acid chain; its full sequence is 3-dehydroquinate synthase (364 aa).

NAD(+) is bound by residues 105-109 (GVVGD), 129-130 (TT), K142, and K151. The Zn(2+) site is built by E184, H247, and H264.

It belongs to the sugar phosphate cyclases superfamily. Dehydroquinate synthase family. Co(2+) serves as cofactor. Requires Zn(2+) as cofactor. The cofactor is NAD(+).

The protein resides in the cytoplasm. The enzyme catalyses 7-phospho-2-dehydro-3-deoxy-D-arabino-heptonate = 3-dehydroquinate + phosphate. Its pathway is metabolic intermediate biosynthesis; chorismate biosynthesis; chorismate from D-erythrose 4-phosphate and phosphoenolpyruvate: step 2/7. Catalyzes the conversion of 3-deoxy-D-arabino-heptulosonate 7-phosphate (DAHP) to dehydroquinate (DHQ). This Acidithiobacillus ferrooxidans (strain ATCC 23270 / DSM 14882 / CIP 104768 / NCIMB 8455) (Ferrobacillus ferrooxidans (strain ATCC 23270)) protein is 3-dehydroquinate synthase.